Here is a 113-residue protein sequence, read N- to C-terminus: MEAWLGSLLFLATMVIASKAVCSIENREIFPNQMSDDCMDADGNKHFLNTPWKKNCTWCSCDKTSITCCTNATRPLSYDKDNCDVQFHPENCTYSVVDRKNPGKTCRVDSWTM.

A signal peptide spans 1–20 (MEAWLGSLLFLATMVIASKA). Cystine bridges form between Cys-22–Cys-69, Cys-38–Cys-61, Cys-56–Cys-92, Cys-59–Cys-68, and Cys-83–Cys-106.

The protein belongs to the beta-microseminoprotein family. In terms of assembly, homodimer; Interacts with PI16.

Its subcellular location is the secreted. The chain is Beta-microseminoprotein (Msmb) from Mus musculus (Mouse).